A 1088-amino-acid polypeptide reads, in one-letter code: RNA-directed RNA polymerase (1088 aa).

Positions 501-687 (LSYGDVTRFL…AKRYLAGGKI (187 aa)) constitute a RdRp catalytic domain.

Belongs to the reoviridae RNA-directed RNA polymerase family. In terms of assembly, interacts with VP3 (Potential). Interacts with VP2; this interaction activates VP1. Interacts with NSP5; this interaction is probably necessary for the formation of functional virus factories. Interacts with NSP2; this interaction is weak. The cofactor is Mg(2+).

Its subcellular location is the virion. The catalysed reaction is RNA(n) + a ribonucleoside 5'-triphosphate = RNA(n+1) + diphosphate. In terms of biological role, RNA-directed RNA polymerase that is involved in both transcription and genome replication. Together with VP3 capping enzyme, forms an enzyme complex positioned near the channels situated at each of the five-fold vertices of the core. Following infection, the outermost layer of the virus is lost, leaving a double-layered particle (DLP) made up of the core and VP6 shell. VP1 then catalyzes the transcription of fully conservative plus-strand genomic RNAs that are extruded through the DLP's channels into the cytoplasm where they function as mRNAs for translation of viral proteins. One copy of each of the viral (+)RNAs is also recruited during core assembly, together with newly synthesized polymerase complexes and VP2. The polymerase of these novo-formed particles catalyzes the synthesis of complementary minus-strands leading to dsRNA formation. To do so, the polymerase specifically recognizes and binds 4 bases 5'-UGUG-3' in the conserved 3'-sequence of plus-strand RNA templates. VP2 presumably activates the autoinhibited VP1-RNA complex to coordinate packaging and genome replication. Once dsRNA synthesis is complete, the polymerase switches to the transcriptional mode, thus providing secondary transcription. This chain is RNA-directed RNA polymerase, found in Rotavirus A (strain RVA/Human/Japan/KU/1995/G1P1A[8]) (RV-A).